Reading from the N-terminus, the 416-residue chain is Phakinin (416 aa).

The disordered stretch occupies residues 1–48; sequence MSERRVAMDLPSGSNASMPLQRHRVSSLRGTRSPSSLDSPPASRTSAV. At serine 2 the chain carries N-acetylserine. A head region spans residues 2 to 115; it reads SERRVAMDLP…HATAEDLGGC (114 aa). Phosphoserine occurs at positions 27, 33, 36, and 91. Residues 28 to 48 show a composition bias toward polar residues; that stretch reads LRGTRSPSSLDSPPASRTSAV. The IF rod domain occupies 105 to 416; sequence NHATAEDLGG…HALLDREESN (312 aa). Coiled-coil stretches lie at residues 199 to 240 and 314 to 391; these read FRKA…SLSR and LAAA…ERAH. The segment at 397–416 is tail; the sequence is GQLQKDVASYHALLDREESN.

This sequence belongs to the intermediate filament family. Part of a complex required for lens intermediate filament formation composed of BFSP1, BFSP2, and CRYAA. Found in a complex composed of PPL (via C-terminal linker domain), BFSP1 and BFSP2 in the retinal lens. Within the complex interacts with PPL (via C-terminal linker domain) and with BFSP1. Identified in a complex that contains VIM, EZR, AHNAK, BFSP1, BFSP2, ANK2, PLEC, PRX and spectrin. Interacts with LGSN. Interacts with VIM. As to expression, expressed in the deep and shallow cortices of the retina lens (at protein level).

Its subcellular location is the cell membrane. It localises to the cytoplasm. It is found in the cytoskeleton. The protein localises to the cell cortex. Its function is as follows. Required for the correct formation of lens intermediate filaments as part of a complex composed of BFSP1, BFSP2 and CRYAA. Plays a role in maintenance of retinal lens optical clarity. The protein is Phakinin of Rattus norvegicus (Rat).